Reading from the N-terminus, the 940-residue chain is UvrABC system protein A (940 aa).

31–38 (GLSGSGKS) contributes to the ATP binding site. The C4-type zinc-finger motif lies at 252-279 (CPQCGYSMQELEPRLFSFNNPAGACGTC). 2 consecutive ABC transporter domains span residues 309–586 (WDQK…PNSL) and 606–936 (RDPK…RFLK). 639–646 (GVSGSGKS) lines the ATP pocket. Residues 739–765 (CEACQGDGVIKVEMHFLPDVYVPCDVC) form a C4-type zinc finger.

The protein belongs to the ABC transporter superfamily. UvrA family. As to quaternary structure, forms a heterotetramer with UvrB during the search for lesions.

It is found in the cytoplasm. The UvrABC repair system catalyzes the recognition and processing of DNA lesions. UvrA is an ATPase and a DNA-binding protein. A damage recognition complex composed of 2 UvrA and 2 UvrB subunits scans DNA for abnormalities. When the presence of a lesion has been verified by UvrB, the UvrA molecules dissociate. This chain is UvrABC system protein A, found in Vibrio parahaemolyticus serotype O3:K6 (strain RIMD 2210633).